We begin with the raw amino-acid sequence, 479 residues long: Protein ORD (479 aa).

Positions 102-140 (KEEETEPESESDLDEGPSTSKQALERMVQRAERKAKEAS) are disordered. Residues 104–116 (EETEPESESDLDE) show a composition bias toward acidic residues. Residues 124 to 140 (ALERMVQRAERKAKEAS) show a composition bias toward basic and acidic residues.

As to quaternary structure, interacts with Sce.

Its subcellular location is the nucleus. It is found in the chromosome. It localises to the centromere. Functionally, essential for proper maintenance of sister-chromatid cohesion in both male and female meiosis. Mutations in ord cause premature separation of the sister chromatids in meiosis I and random segregation in both meiotic divisions. Required for chiasma maintenance in female meiosis. Mutations in ord reduce recombination in female meiosis. The sequence is that of Protein ORD (ord) from Drosophila melanogaster (Fruit fly).